The sequence spans 479 residues: ATP synthase subunit beta (479 aa).

158–165 (GGAGLGKT) serves as a coordination point for ATP.

It belongs to the ATPase alpha/beta chains family. As to quaternary structure, F-type ATPases have 2 components, CF(1) - the catalytic core - and CF(0) - the membrane proton channel. CF(1) has five subunits: alpha(3), beta(3), gamma(1), delta(1), epsilon(1). CF(0) has three main subunits: a(1), b(2) and c(9-12). The alpha and beta chains form an alternating ring which encloses part of the gamma chain. CF(1) is attached to CF(0) by a central stalk formed by the gamma and epsilon chains, while a peripheral stalk is formed by the delta and b chains.

The protein resides in the cell inner membrane. It catalyses the reaction ATP + H2O + 4 H(+)(in) = ADP + phosphate + 5 H(+)(out). Functionally, produces ATP from ADP in the presence of a proton gradient across the membrane. The catalytic sites are hosted primarily by the beta subunits. The sequence is that of ATP synthase subunit beta from Rhodopirellula baltica (strain DSM 10527 / NCIMB 13988 / SH1).